The primary structure comprises 649 residues: Endoglucanase D (649 aa).

The first 41 residues, 1-41 (MSRMTLKSSMKKRVLSLLIAVVFLSLTGVFPSGLIETKVSA), serve as a signal peptide directing secretion. Asp201 serves as the catalytic Nucleophile. Catalysis depends on residues His516 and Asp546. Glu555 acts as the Proton donor in catalysis. The Dockerin domain maps to 579 to 649 (NEVLYGDVND…LIRVIEKLPI (71 aa)).

Belongs to the glycosyl hydrolase 9 (cellulase E) family. It depends on Ca(2+) as a cofactor.

The catalysed reaction is Endohydrolysis of (1-&gt;4)-beta-D-glucosidic linkages in cellulose, lichenin and cereal beta-D-glucans.. Functionally, this enzyme catalyzes the endohydrolysis of 1,4-beta-glucosidic linkages in cellulose, lichenin and cereal beta-D-glucans. The chain is Endoglucanase D (celD) from Acetivibrio thermocellus (strain ATCC 27405 / DSM 1237 / JCM 9322 / NBRC 103400 / NCIMB 10682 / NRRL B-4536 / VPI 7372) (Clostridium thermocellum).